A 619-amino-acid polypeptide reads, in one-letter code: Secretogranin-2 (619 aa).

A signal peptide spans 1-30 (MTESKAYRFGAVLLLIHLIFLVPGTEAASF). Tyr153 is subject to Sulfotyrosine. Phosphoserine is present on residues Ser176 and Ser270. Positions 247 to 307 (VGGEDWSPME…RKESKDQLSE (61 aa)) are disordered. Composition is skewed to basic and acidic residues over residues 255–286 (MEEK…EMKR) and 295–307 (EGNR…QLSE). Residues Ser434, Ser534, Ser557, and Ser558 each carry the phosphoserine modification.

It belongs to the chromogranin/secretogranin protein family. As to quaternary structure, interacts with Secretogranin III/SCG3. As to expression, brain. Expression in the pituitary is restricted to the anterior lobe. Expression in the hypothalamus is observed in the neuronal cells and neurons of arcuate nucleus, supraoptic nucleus and median eminence (at protein level).

The protein resides in the secreted. Neuroendocrine protein of the granin family that regulates the biogenesis of secretory granules. This is Secretogranin-2 (Scg2) from Rattus norvegicus (Rat).